The primary structure comprises 222 residues: Flagellin B5 (222 aa).

A propeptide spanning residues 1–4 is cleaved from the precursor; the sequence is MRRG.

The protein belongs to the archaeal flagellin family.

The protein resides in the archaeal flagellum. In terms of biological role, flagellin is the subunit protein which polymerizes to form the filaments of archaeal flagella. The sequence is that of Flagellin B5 (flaB5) from Pyrococcus abyssi (strain GE5 / Orsay).